The following is a 108-amino-acid chain: UPF0102 protein Sden_0272 (108 aa).

This sequence belongs to the UPF0102 family.

The chain is UPF0102 protein Sden_0272 from Shewanella denitrificans (strain OS217 / ATCC BAA-1090 / DSM 15013).